A 311-amino-acid polypeptide reads, in one-letter code: Solute carrier family 25 member 48 (311 aa).

3 Solcar repeats span residues 3–86, 100–205, and 214–301; these read NFQL…TQRF, PHVL…LSDW, and PSPC…SLQA. 6 consecutive transmembrane segments (helical) span residues 9 to 29, 61 to 81, 107 to 127, 193 to 213, 217 to 237, and 277 to 295; these read FVAGWIGGAASVIVGHPLDTV, GMSFPLASIAVYNSVVFGVFS, LLASMVAGVVSVGLGAPVDLI, CLYFIPYVFLSDWITPEACAG, CAVWLAGGMAGAISWGTATPM, and ITVNAVRGFPMSAAMFLGY.

It belongs to the mitochondrial carrier (TC 2.A.29) family.

The protein localises to the mitochondrion inner membrane. This Bos taurus (Bovine) protein is Solute carrier family 25 member 48 (SLC25A48).